Consider the following 898-residue polypeptide: Cip1-interacting zinc finger protein (898 aa).

Disordered stretches follow at residues 48–69 (QAPLPMAVSRGLPPQQPQQPLL), 157–305 (QSLL…ALEA), and 318–471 (VQAQ…QPQV). The span at 170–203 (NPSQFNLSGRNPQKQARTSSSTTPNRKDSSSQTM) shows a compositional bias: polar residues. Ser209 is subject to Phosphoserine. At Thr244 the chain carries Phosphothreonine. Over residues 263-273 (RSSEEPTEKEP) the composition is skewed to basic and acidic residues. Lys280 participates in a covalent cross-link: Glycyl lysine isopeptide (Lys-Gly) (interchain with G-Cter in SUMO2). A compositionally biased stretch (low complexity) spans 318-327 (VQAQVQSQTQ). Polar residues predominate over residues 328–351 (PRIPSTDTQVQPKLQKQAQTQTSP). Lys340 participates in a covalent cross-link: Glycyl lysine isopeptide (Lys-Gly) (interchain with G-Cter in SUMO2). Ser350 bears the Phosphoserine mark. A compositionally biased stretch (low complexity) spans 355-383 (VLQQKQVQPQLQQEAEPQKQVQPQVQPQA). Residues 384–395 (HSQGPRQVQLQQ) show a composition bias toward polar residues. Residue Lys401 forms a Glycyl lysine isopeptide (Lys-Gly) (interchain with G-Cter in SUMO2) linkage. The segment covering 402–435 (QVQPQVQPQAHSQPPRQVQLQLQKQVQTQTYPQV) has biased composition (low complexity). The segment covering 436–445 (HTQAQPSVQP) has biased composition (polar residues). At Ser547 the chain carries Phosphoserine. A Glycyl lysine isopeptide (Lys-Gly) (interchain with G-Cter in SUMO2) cross-link involves residue Lys549. Residues 562 to 584 (STVPLTPVPRPSDSVSSTPAATS) form a disordered region. The residue at position 567 (Thr567) is a Phosphothreonine. Positions 572–584 (PSDSVSSTPAATS) are enriched in low complexity. Glycyl lysine isopeptide (Lys-Gly) (interchain with G-Cter in SUMO2) cross-links involve residues Lys588, Lys680, and Lys705. The segment at 799–830 (YICRICHKFYHSNSGAQLSHCKSLGHFENLQK) adopts a Matrin-type zinc-finger fold. Ser821 carries the post-translational modification Phosphoserine. Lys830 is covalently cross-linked (Glycyl lysine isopeptide (Lys-Gly) (interchain with G-Cter in SUMO2)). Phosphoserine is present on Ser838. Positions 859–879 (LFTSSGRPPSQPNTQDKTPSK) are enriched in polar residues. The segment at 859–898 (LFTSSGRPPSQPNTQDKTPSKVTARPSQPPLPRRSTRLKT) is disordered. Lys879 participates in a covalent cross-link: Glycyl lysine isopeptide (Lys-Gly) (interchain with G-Cter in SUMO2).

In terms of assembly, interacts with CIP/WAF1.

Its subcellular location is the nucleus. In terms of biological role, may regulate the subcellular localization of CIP/WAF1. This chain is Cip1-interacting zinc finger protein (CIZ1), found in Homo sapiens (Human).